The sequence spans 813 residues: Cadherin-22 (813 aa).

Positions 1–33 are cleaved as a signal peptide; it reads MRPRPEGALRAGAALSPVLLFLLLLPLLGHLWA. The Extracellular portion of the chain corresponds to 34–621; that stretch reads ASTPAPSSLS…AFVMAASLSP (588 aa). 5 consecutive Cadherin domains span residues 61-165, 166-274, 275-391, 392-495, and 496-613; these read WVWN…EPRF, LHGP…PPRF, PQKM…PPEF, RPPS…NPPE, and LATP…TTAF. Asn159 is a glycosylation site (N-linked (GlcNAc...) asparagine). Asn463 and Asn609 each carry an N-linked (GlcNAc...) asparagine glycan. The chain crosses the membrane as a helical span at residues 622–642; it reads GALIALLVCVLILVVLALLIL. Residues 643–813 are Cytoplasmic-facing; it reads TLRRHHKSHL…HRGDDEAPAS (171 aa). The segment at 696–726 is disordered; that stretch reads GGDPGGGAASPPQAASSSERHSLPRGPSSPE.

Predominantly expressed in brain. Abundant in olfactory bulb, cerebrum, and cerebellum, less in pons, medulla, and spinal cord. Low expression in heart. No expression in lung, liver, spleen, kidney, testis, stomach, intestine, colon, and placenta.

The protein resides in the cell membrane. Cadherins are calcium-dependent cell adhesion proteins. They preferentially interact with themselves in a homophilic manner in connecting cells; cadherins may thus contribute to the sorting of heterogeneous cell types. PB-cadherins may have a role in the morphological organization of pituitary gland and brain tissues. The protein is Cadherin-22 (Cdh22) of Mus musculus (Mouse).